Consider the following 203-residue polypeptide: dITP/XTP pyrophosphatase (203 aa).

Residue 15–20 coordinates substrate; the sequence is SGNAGK. Residues E45 and D74 each contribute to the Mg(2+) site. The active-site Proton acceptor is the D74. Residues S75, 153–156, K176, and 181–182 each bind substrate; these read FGYD and HR.

This sequence belongs to the HAM1 NTPase family. In terms of assembly, homodimer. Requires Mg(2+) as cofactor.

The catalysed reaction is XTP + H2O = XMP + diphosphate + H(+). It catalyses the reaction dITP + H2O = dIMP + diphosphate + H(+). The enzyme catalyses ITP + H2O = IMP + diphosphate + H(+). Functionally, pyrophosphatase that catalyzes the hydrolysis of nucleoside triphosphates to their monophosphate derivatives, with a high preference for the non-canonical purine nucleotides XTP (xanthosine triphosphate), dITP (deoxyinosine triphosphate) and ITP. Seems to function as a house-cleaning enzyme that removes non-canonical purine nucleotides from the nucleotide pool, thus preventing their incorporation into DNA/RNA and avoiding chromosomal lesions. This chain is dITP/XTP pyrophosphatase, found in Prochlorococcus marinus (strain MIT 9313).